A 30-amino-acid polypeptide reads, in one-letter code: Alpha-conotoxin EIVA (30 aa).

Intrachain disulfides connect cysteine 2–cysteine 16, cysteine 3–cysteine 11, and cysteine 14–cysteine 24. Proline 7, proline 13, proline 21, proline 22, and proline 27 each carry 4-hydroxyproline. Glycine amide is present on glycine 30.

Expressed by the venom duct.

Its subcellular location is the secreted. Alpha-conotoxins act on postsynaptic membranes, they bind to the nicotinic acetylcholine receptors (nAChR) and thus inhibit them. This toxin binds with high affinity to both fetal (alpha-1-beta-1-epsilon-delta (CHRNA1-CHRNB1-CHRND-CHRNE) subunits) and adult (alpha-1/beta-1/gamma/delta subunits) mammalian muscle nicotinic acetylcholine receptors (nAChR). This Conus ermineus (Agate cone) protein is Alpha-conotoxin EIVA.